The primary structure comprises 98 residues: NADH-ubiquinone oxidoreductase chain 4L (98 aa).

The next 3 membrane-spanning stretches (helical) occupy residues 1 to 21, 29 to 49, and 61 to 81; these read MSMVYMNIMLAFTMSLIGLLM, SLLCLEGMMLSLFVMASLMIL, and IILLVFAACEAALGLALLVMI.

The protein belongs to the complex I subunit 4L family. In terms of assembly, core subunit of respiratory chain NADH dehydrogenase (Complex I) which is composed of 45 different subunits.

It localises to the mitochondrion inner membrane. The catalysed reaction is a ubiquinone + NADH + 5 H(+)(in) = a ubiquinol + NAD(+) + 4 H(+)(out). Core subunit of the mitochondrial membrane respiratory chain NADH dehydrogenase (Complex I) which catalyzes electron transfer from NADH through the respiratory chain, using ubiquinone as an electron acceptor. Part of the enzyme membrane arm which is embedded in the lipid bilayer and involved in proton translocation. The polypeptide is NADH-ubiquinone oxidoreductase chain 4L (MT-ND4L) (Vicugna pacos (Alpaca)).